A 923-amino-acid chain; its full sequence is MSELESEYRLEYFETEGFHRKQCPVTDVYFWTRDPDRETCGEPPADDYSFIDNPGFDDQYSLSGMREEFLSFFESRDHDRIEPYPVAANRWRDDVLLTQASIYDFQPLVTSGQTPPPANPLCISQPCIRMQDIDNVGKTGRHTMAFEMMAHHAFNTREDASDEYAYTGEVYWKDETVRLCDAFFEHMGADLTEITYIEDPWVGGGNAGPAFEVLYRGAELATLVFMSMEQDESGEYEMKDGNRYSPMDTYVVDTGYGLERWAWVSQGTPTVYEAVYPDTIEFLKNDADVTHTTDEKELIQQAAMLSGYLDIDEIDNLASARADVADELDVDPSVLTDLLEPLESIYAIADHYRTLAYMFGDEIVPSNVGTGYLTRMVLRRTQRLIDDIGIDAPLDELVDMQAERLGYENRDTIRDIVRTEDRKYRETLSRGRRRVETLADEYADRNESIPVDELIELYDSHGIQPDMVTEIASDRGATVEIPDDFYSLVADRHTDDDTTETIEKRRDRLADLPETDRLYYDDQTGTEFEAVVLDIFEQDTGYDIVLDQTMFYPEGGGQPADHGTLTTEEETIEITDVKAQDGVILHQATENPGKGDFIRGQLDVERRRRLMQHHTATHIIGHAARKVLGDHVRQAGAQKGTDSARFDLTHYERINRIEAKTIESVANDIIRQNISVRQDWPDRHEAENEHGFDLYQGGIPPGQNIRTITIGDDIQACGGTHVTRTGDIGTIKILTTEPVQDGVERIVFAAGDAAIDAVQTTEDALYDAADVLDVTPEHVPETADRFFTEWKERGKTIDKLKSELAEARAQGVTADAVSIDGIDAVIKTVNGDADELRKTANAIVDEDAVAVLGSDVDGSAQFVVGVPEDIGINAGDVVGQLARKVGGGGGGPPDFAQGGGPDAASLEVALDDATSVLRSMHET.

Zn(2+)-binding residues include histidine 614, histidine 618, cysteine 717, and histidine 721. The segment at 884 to 903 is disordered; that stretch reads KVGGGGGGPPDFAQGGGPDA. The segment covering 885–901 has biased composition (gly residues); it reads VGGGGGGPPDFAQGGGP.

It belongs to the class-II aminoacyl-tRNA synthetase family. Zn(2+) is required as a cofactor.

The protein resides in the cytoplasm. It catalyses the reaction tRNA(Ala) + L-alanine + ATP = L-alanyl-tRNA(Ala) + AMP + diphosphate. Its function is as follows. Catalyzes the attachment of alanine to tRNA(Ala) in a two-step reaction: alanine is first activated by ATP to form Ala-AMP and then transferred to the acceptor end of tRNA(Ala). Also edits incorrectly charged Ser-tRNA(Ala) and Gly-tRNA(Ala) via its editing domain. The polypeptide is Alanine--tRNA ligase (Haloquadratum walsbyi (strain DSM 16790 / HBSQ001)).